A 154-amino-acid chain; its full sequence is Myoglobin (154 aa).

The 147-residue stretch at 2 to 148 folds into the Globin domain; the sequence is VLSDAEWQLV…FRKDIAAKYK (147 aa). Serine 4 bears the Phosphoserine mark. Histidine 65 lines the nitrite pocket. Histidine 65 provides a ligand contact to O2. Threonine 68 carries the post-translational modification Phosphothreonine. Position 94 (histidine 94) interacts with heme b.

Belongs to the globin family. As to quaternary structure, monomeric.

The protein resides in the cytoplasm. It localises to the sarcoplasm. The catalysed reaction is Fe(III)-heme b-[protein] + nitric oxide + H2O = Fe(II)-heme b-[protein] + nitrite + 2 H(+). The enzyme catalyses H2O2 + AH2 = A + 2 H2O. In terms of biological role, monomeric heme protein which primary function is to store oxygen and facilitate its diffusion within muscle tissues. Reversibly binds oxygen through a pentacoordinated heme iron and enables its timely and efficient release as needed during periods of heightened demand. Depending on the oxidative conditions of tissues and cells, and in addition to its ability to bind oxygen, it also has a nitrite reductase activity whereby it regulates the production of bioactive nitric oxide. Under stress conditions, like hypoxia and anoxia, it also protects cells against reactive oxygen species thanks to its pseudoperoxidase activity. In Eschrichtius robustus (California gray whale), this protein is Myoglobin (MB).